We begin with the raw amino-acid sequence, 482 residues long: tRNA sulfurtransferase (482 aa).

Residues 61–165 form the THUMP domain; it reads LAIRDALTRI…DDRLLLIKGR (105 aa). ATP is bound by residues 183–184, Lys-265, Gly-287, and Gln-296; that span reads LI. An intrachain disulfide couples Cys-344 to Cys-456. The 79-residue stretch at 404-482 folds into the Rhodanese domain; sequence FGANDVILDI…GFANVKVYRP (79 aa). Residue Cys-456 is the Cysteine persulfide intermediate of the active site.

It belongs to the ThiI family.

Its subcellular location is the cytoplasm. The catalysed reaction is [ThiI sulfur-carrier protein]-S-sulfanyl-L-cysteine + a uridine in tRNA + 2 reduced [2Fe-2S]-[ferredoxin] + ATP + H(+) = [ThiI sulfur-carrier protein]-L-cysteine + a 4-thiouridine in tRNA + 2 oxidized [2Fe-2S]-[ferredoxin] + AMP + diphosphate. It carries out the reaction [ThiS sulfur-carrier protein]-C-terminal Gly-Gly-AMP + S-sulfanyl-L-cysteinyl-[cysteine desulfurase] + AH2 = [ThiS sulfur-carrier protein]-C-terminal-Gly-aminoethanethioate + L-cysteinyl-[cysteine desulfurase] + A + AMP + 2 H(+). It participates in cofactor biosynthesis; thiamine diphosphate biosynthesis. Functionally, catalyzes the ATP-dependent transfer of a sulfur to tRNA to produce 4-thiouridine in position 8 of tRNAs, which functions as a near-UV photosensor. Also catalyzes the transfer of sulfur to the sulfur carrier protein ThiS, forming ThiS-thiocarboxylate. This is a step in the synthesis of thiazole, in the thiamine biosynthesis pathway. The sulfur is donated as persulfide by IscS. The polypeptide is tRNA sulfurtransferase (Salmonella paratyphi B (strain ATCC BAA-1250 / SPB7)).